The sequence spans 1405 residues: DNA-directed RNA polymerase subunit beta' (1405 aa).

Zn(2+) is bound by residues cysteine 71, cysteine 73, cysteine 86, and cysteine 89. Mg(2+) is bound by residues aspartate 462, aspartate 464, and aspartate 466. Residues cysteine 820, cysteine 893, cysteine 900, and cysteine 903 each contribute to the Zn(2+) site.

This sequence belongs to the RNA polymerase beta' chain family. The RNAP catalytic core consists of 2 alpha, 1 beta, 1 beta' and 1 omega subunit. When a sigma factor is associated with the core the holoenzyme is formed, which can initiate transcription. It depends on Mg(2+) as a cofactor. Zn(2+) serves as cofactor.

It carries out the reaction RNA(n) + a ribonucleoside 5'-triphosphate = RNA(n+1) + diphosphate. Its function is as follows. DNA-dependent RNA polymerase catalyzes the transcription of DNA into RNA using the four ribonucleoside triphosphates as substrates. The sequence is that of DNA-directed RNA polymerase subunit beta' from Methylorubrum populi (strain ATCC BAA-705 / NCIMB 13946 / BJ001) (Methylobacterium populi).